A 395-amino-acid polypeptide reads, in one-letter code: Dihydroorotate dehydrogenase (quinone), mitochondrial (395 aa).

The N-terminal 10 residues, 1–10 (MAWRQLKKRA), are a transit peptide targeting the mitochondrion; not cleaved. Over 1–10 (MAWRQLKKRA) the chain is Mitochondrial matrix. The helical transmembrane segment at 11-30 (QDAMVILGGGGLLFASYLTA) threads the bilayer. Over 31 to 395 (TGDEHFYAEL…TDAIGADHRR (365 aa)) the chain is Mitochondrial intermembrane. FMN is bound by residues 95–99 (AGFDK) and Ser119. Residue Lys99 participates in substrate binding. Residue 144 to 148 (NRYGF) coordinates substrate. Positions 180 and 211 each coordinate FMN. 211–216 (NVSSPN) serves as a coordination point for substrate. The Nucleophile role is filled by Ser214. FMN contacts are provided by Lys254 and Thr282. 283 to 284 (NS) contributes to the substrate binding site. FMN-binding positions include Gly305, Gly334, and 355-356 (YT).

This sequence belongs to the dihydroorotate dehydrogenase family. Type 2 subfamily. In terms of assembly, monomer. Requires FMN as cofactor. Post-translationally, the uncleaved transit peptide is required for mitochondrial targeting and proper membrane integration.

It is found in the mitochondrion inner membrane. It catalyses the reaction (S)-dihydroorotate + a quinone = orotate + a quinol. It participates in pyrimidine metabolism; UMP biosynthesis via de novo pathway; orotate from (S)-dihydroorotate (quinone route): step 1/1. Catalyzes the conversion of dihydroorotate to orotate with quinone as electron acceptor. Required for UMP biosynthesis via de novo pathway. This Bos taurus (Bovine) protein is Dihydroorotate dehydrogenase (quinone), mitochondrial (DHODH).